The primary structure comprises 323 residues: Acetyl-coenzyme A carboxylase carboxyl transferase subunit alpha (323 aa).

The CoA carboxyltransferase C-terminal domain maps to 32–293 (NISEEVAKLQ…RKALAAQLES (262 aa)).

The protein belongs to the AccA family. Acetyl-CoA carboxylase is a heterohexamer composed of biotin carboxyl carrier protein (AccB), biotin carboxylase (AccC) and two subunits each of ACCase subunit alpha (AccA) and ACCase subunit beta (AccD).

The protein localises to the cytoplasm. The enzyme catalyses N(6)-carboxybiotinyl-L-lysyl-[protein] + acetyl-CoA = N(6)-biotinyl-L-lysyl-[protein] + malonyl-CoA. It functions in the pathway lipid metabolism; malonyl-CoA biosynthesis; malonyl-CoA from acetyl-CoA: step 1/1. In terms of biological role, component of the acetyl coenzyme A carboxylase (ACC) complex. First, biotin carboxylase catalyzes the carboxylation of biotin on its carrier protein (BCCP) and then the CO(2) group is transferred by the carboxyltransferase to acetyl-CoA to form malonyl-CoA. In Alcanivorax borkumensis (strain ATCC 700651 / DSM 11573 / NCIMB 13689 / SK2), this protein is Acetyl-coenzyme A carboxylase carboxyl transferase subunit alpha.